Here is a 31-residue protein sequence, read N- to C-terminus: Nemertide alpha-4 (31 aa).

Disulfide bonds link C2-C16, C9-C20, and C15-C26. Residues P28 and P29 each carry the 4-hydroxyproline modification.

The protein belongs to the nemertide family. In terms of tissue distribution, confined to the epidermis and to the mucus layer.

It is found in the secreted. Its function is as follows. Potent toxin, demonstrating strong inhibitory effects on insect sodium channels (Nav) and reduced activity on mammalian sodium channels. Potently inhibits inactivation of insect sodium channels of B.germanica (BgNav1) (EC(50)=11.1 nM). Also delays the inactivation of most mammalian Nav (human Nav1.1/SCN1A; EC(50)=92 nM, rat Nav1.2/SCN2A; EC(50)=134.2 nM, rat Nav1.3/SCN3A; EC(50)=12.9 nM, rat Nav1.4/SCN4A; EC(50)=14.6 nM, human Nav1.5/SCN5A; EC(50)=27.8 nM, mouse Nav1.6/SCN8A; EC(50)=123.6 nM, human Nav1.9/SCN9A; EC(50)=80.5 nM). Inactivation is completely prevented by a concentration of 1 uM, resulting in sustained, non-inactivating currents. In addition, the toxin significantly enhances the recovery from inactivation, and the open state is not required for the toxin to interact with the channel. In vivo, injection into brine shrimp (Artemia salina) stops movement or causes death after 24 hours (EC(50)=0.4 uM). The polypeptide is Nemertide alpha-4 (Lineus sanguineus (Ribbon worm)).